A 159-amino-acid polypeptide reads, in one-letter code: D-aminoacyl-tRNA deacylase (159 aa).

A Gly-cisPro motif, important for rejection of L-amino acids motif is present at residues 146-147 (GP).

Belongs to the DTD family. Homodimer.

Its subcellular location is the cytoplasm. It catalyses the reaction glycyl-tRNA(Ala) + H2O = tRNA(Ala) + glycine + H(+). The catalysed reaction is a D-aminoacyl-tRNA + H2O = a tRNA + a D-alpha-amino acid + H(+). Its function is as follows. An aminoacyl-tRNA editing enzyme that deacylates mischarged D-aminoacyl-tRNAs. Also deacylates mischarged glycyl-tRNA(Ala), protecting cells against glycine mischarging by AlaRS. Acts via tRNA-based rather than protein-based catalysis; rejects L-amino acids rather than detecting D-amino acids in the active site. By recycling D-aminoacyl-tRNA to D-amino acids and free tRNA molecules, this enzyme counteracts the toxicity associated with the formation of D-aminoacyl-tRNA entities in vivo and helps enforce protein L-homochirality. The polypeptide is D-aminoacyl-tRNA deacylase (Bifidobacterium adolescentis (strain ATCC 15703 / DSM 20083 / NCTC 11814 / E194a)).